We begin with the raw amino-acid sequence, 77 residues long: MKNSSIMFVLIVVFLISSSENQKMVGEAKQCKTGWACFGEDACKEKCMAKYKGVGTVTYFPFPPETIIIYCECLYDC.

The signal sequence occupies residues 1–19; sequence MKNSSIMFVLIVVFLISSS. Disulfide bonds link cysteine 31-cysteine 77, cysteine 43-cysteine 71, and cysteine 47-cysteine 73.

Belongs to the DEFL family.

It localises to the secreted. The polypeptide is Putative defensin-like protein 187 (LCR42) (Arabidopsis thaliana (Mouse-ear cress)).